Reading from the N-terminus, the 385-residue chain is 8-amino-7-oxononanoate synthase (385 aa).

Substrate is bound at residue arginine 21. A pyridoxal 5'-phosphate-binding site is contributed by 108–109; sequence GF. Histidine 133 contributes to the substrate binding site. Residues serine 179, histidine 207, and threonine 233 each contribute to the pyridoxal 5'-phosphate site. Lysine 236 is subject to N6-(pyridoxal phosphate)lysine. Threonine 352 provides a ligand contact to substrate.

This sequence belongs to the class-II pyridoxal-phosphate-dependent aminotransferase family. BioF subfamily. Homodimer. Pyridoxal 5'-phosphate is required as a cofactor.

It carries out the reaction 6-carboxyhexanoyl-[ACP] + L-alanine + H(+) = (8S)-8-amino-7-oxononanoate + holo-[ACP] + CO2. It participates in cofactor biosynthesis; biotin biosynthesis. Catalyzes the decarboxylative condensation of pimeloyl-[acyl-carrier protein] and L-alanine to produce 8-amino-7-oxononanoate (AON), [acyl-carrier protein], and carbon dioxide. In Salmonella enteritidis PT4 (strain P125109), this protein is 8-amino-7-oxononanoate synthase.